The sequence spans 223 residues: Killer cell lectin-like receptor subfamily B member 1B allele C (223 aa).

The Cytoplasmic portion of the chain corresponds to 1–45 (MDTAVVYADLHLARTGEPKRESPPSLSPDTCQCPRWHRLALKLGC). The ITIM motif signature appears at 5–10 (VVYADL). Positions 31 to 34 (CQCP) match the LCK-binding motif motif. A helical; Signal-anchor for type II membrane protein membrane pass occupies residues 46–66 (ACFILLVLSVIGLGVLVLTLL). Residues 67-223 (QKPLLQNSPA…LKRESTCNDS (157 aa)) are Extracellular-facing. A C-type lectin domain is found at 101-211 (HRDKCFHVSQ…CDSDNIWICQ (111 aa)). Intrachain disulfides connect cysteine 122–cysteine 210 and cysteine 189–cysteine 202.

Homodimer; disulfide-linked. Interacts with tyrosine kinase LCK. Binds PTPN6/SHP-1 in a phosphorylation-dependent manner. As to expression, expressed in a subset of natural killer cells.

Its subcellular location is the membrane. Receptor for CLEC2D/OCIL. Ligand-binding contributes to inhibition of cytotoxic natural killer (NK) cells. May mediate MHC class I-independent 'missing-self' recognition of allografts, tumor cells and virus-infected cells. The polypeptide is Killer cell lectin-like receptor subfamily B member 1B allele C (Rattus norvegicus (Rat)).